We begin with the raw amino-acid sequence, 351 residues long: MSSANIPATQSALIFEKYGGPLEVRQVSVPQPQENELLVKIEYSGICHSDLHTWEGDFEYASICPLIGGHEGAGTVVTIGSKVKGWNIGDRAGIKLINANCLNCEYCKTGHEPLCDHIQNYGIDRHGTFQEYLTIRDIDAIKVSNDTNLAAAAPVLCGGVTAYKSLKATNVKPGQIVVLTGAGGGLGSFGIQYAKAMGMRVVAVDHISKEDHCRNLGAEWFVDAFDTPDIVAHIRKLTNGGAHGVVSFAAAKKPMEYALEYVRKRGTVVFVGLPKDGTIPLDTLSLICNEITVKGSIVGSRMDVDEAIDFITRGIVHVPIELVKLEDVPSVYQRMKDGKVTSRVVVDFSMR.

Residues C47, H70, C101, C104, C107, C115, and C157 each coordinate Zn(2+). Residues 181–187 (GAGGGLG), D205, K209, 271–273 (VGL), and R343 contribute to the NAD(+) site.

This sequence belongs to the zinc-containing alcohol dehydrogenase family. In terms of assembly, homotetramer. Zn(2+) serves as cofactor.

The enzyme catalyses a primary alcohol + NAD(+) = an aldehyde + NADH + H(+). It carries out the reaction a secondary alcohol + NAD(+) = a ketone + NADH + H(+). This is Alcohol dehydrogenase 2 (sodh-2) from Caenorhabditis elegans.